A 650-amino-acid chain; its full sequence is Putative F-box protein R757 (650 aa).

An F-box domain is found at 7 to 53 (FSVMESLPTELAYHVLSFIDFNSVVTYRLCSQESNNFIKSMLVFFPI).

The protein is Putative F-box protein R757 of Acanthamoeba polyphaga mimivirus (APMV).